A 382-amino-acid polypeptide reads, in one-letter code: 1-deoxy-D-xylulose 5-phosphate reductoisomerase (382 aa).

6 residues coordinate NADPH: threonine 10, glycine 11, serine 12, isoleucine 13, glycine 36, and asparagine 122. Position 123 (lysine 123) interacts with 1-deoxy-D-xylulose 5-phosphate. Glutamate 124 provides a ligand contact to NADPH. Mn(2+) is bound at residue aspartate 148. 4 residues coordinate 1-deoxy-D-xylulose 5-phosphate: serine 149, glutamate 150, serine 174, and histidine 197. Glutamate 150 is a binding site for Mn(2+). Glycine 203 is a binding site for NADPH. Residues serine 210, asparagine 215, lysine 216, and glutamate 219 each coordinate 1-deoxy-D-xylulose 5-phosphate. Position 219 (glutamate 219) interacts with Mn(2+).

It belongs to the DXR family. The cofactor is Mg(2+). Requires Mn(2+) as cofactor.

The enzyme catalyses 2-C-methyl-D-erythritol 4-phosphate + NADP(+) = 1-deoxy-D-xylulose 5-phosphate + NADPH + H(+). The protein operates within isoprenoid biosynthesis; isopentenyl diphosphate biosynthesis via DXP pathway; isopentenyl diphosphate from 1-deoxy-D-xylulose 5-phosphate: step 1/6. Catalyzes the NADPH-dependent rearrangement and reduction of 1-deoxy-D-xylulose-5-phosphate (DXP) to 2-C-methyl-D-erythritol 4-phosphate (MEP). This is 1-deoxy-D-xylulose 5-phosphate reductoisomerase from Chlorobium limicola (strain DSM 245 / NBRC 103803 / 6330).